The primary structure comprises 296 residues: Ribonuclease HIII (296 aa).

In terms of domain architecture, RNase H type-2 spans 80–296 (LALIGSDEVG…NTKKAYQRLK (217 aa)). 3 residues coordinate a divalent metal cation: D86, E87, and D191.

Belongs to the RNase HII family. RnhC subfamily. It depends on Mn(2+) as a cofactor. Requires Mg(2+) as cofactor.

It is found in the cytoplasm. The enzyme catalyses Endonucleolytic cleavage to 5'-phosphomonoester.. Endonuclease that specifically degrades the RNA of RNA-DNA hybrids. This chain is Ribonuclease HIII, found in Streptococcus thermophilus (strain CNRZ 1066).